We begin with the raw amino-acid sequence, 103 residues long: ATP synthase F(0) complex subunit g, mitochondrial (103 aa).

Ala2 is subject to N-acetylalanine. N6-acetyllysine is present on residues Lys11, Lys24, Lys35, and Lys54.

The protein belongs to the ATPase g subunit family. Component of the ATP synthase complex composed at least of ATP5F1A/subunit alpha, ATP5F1B/subunit beta, ATP5MC1/subunit c (homooctomer), MT-ATP6/subunit a, MT-ATP8/subunit 8, ATP5ME/subunit e, ATP5MF/subunit f, ATP5MG/subunit g, ATP5MK/subunit k, ATP5MJ/subunit j, ATP5F1C/subunit gamma, ATP5F1D/subunit delta, ATP5F1E/subunit epsilon, ATP5PF/subunit F6, ATP5PB/subunit b, ATP5PD/subunit d, ATP5PO/subunit OSCP. ATP synthase complex consists of a soluble F(1) head domain (subunits alpha(3) and beta(3)) - the catalytic core - and a membrane F(0) domain - the membrane proton channel (subunits c, a, 8, e, f, g, k and j). These two domains are linked by a central stalk (subunits gamma, delta, and epsilon) rotating inside the F1 region and a stationary peripheral stalk (subunits F6, b, d, and OSCP).

The protein localises to the mitochondrion. It localises to the mitochondrion inner membrane. Its function is as follows. Subunit g, of the mitochondrial membrane ATP synthase complex (F(1)F(0) ATP synthase or Complex V) that produces ATP from ADP in the presence of a proton gradient across the membrane which is generated by electron transport complexes of the respiratory chain. ATP synthase complex consist of a soluble F(1) head domain - the catalytic core - and a membrane F(1) domain - the membrane proton channel. These two domains are linked by a central stalk rotating inside the F(1) region and a stationary peripheral stalk. During catalysis, ATP synthesis in the catalytic domain of F(1) is coupled via a rotary mechanism of the central stalk subunits to proton translocation. In vivo, can only synthesize ATP although its ATP hydrolase activity can be activated artificially in vitro. Part of the complex F(0) domain. This chain is ATP synthase F(0) complex subunit g, mitochondrial, found in Mus musculus (Mouse).